Here is a 487-residue protein sequence, read N- to C-terminus: Serine/threonine-protein kinase BSK7 (487 aa).

The N-myristoyl glycine moiety is linked to residue glycine 2. A Protein kinase domain is found at 59–325 (ENIVSEHGEK…DLETPSHQLM (267 aa)). ATP-binding positions include 65 to 73 (HGEKAPNVV) and lysine 87. The active-site Proton acceptor is aspartate 181.

Belongs to the protein kinase superfamily. Ser/Thr protein kinase family.

Its subcellular location is the cell membrane. It carries out the reaction L-seryl-[protein] + ATP = O-phospho-L-seryl-[protein] + ADP + H(+). It catalyses the reaction L-threonyl-[protein] + ATP = O-phospho-L-threonyl-[protein] + ADP + H(+). In terms of biological role, probable serine/threonine kinase that acts as a positive regulator of brassinosteroid (BR) signaling downstream of the receptor kinase BRI1. Functions redundantly with BSK3, BSK5, BSK6 and BSK8. The protein is Serine/threonine-protein kinase BSK7 of Arabidopsis thaliana (Mouse-ear cress).